A 259-amino-acid polypeptide reads, in one-letter code: uncharacterized protein (259 aa).

3 disordered regions span residues 22-68, 111-133, and 181-202; these read GLQP…VSFG, REEQKLRKRSRQNDDGSDDDEVE, and LGGKKETEKMPMAARRGMKKKQ. Residues 50 to 63 show a composition bias toward acidic residues; it reads NEEEDAISDMEDKE. Ser-127 carries the post-translational modification Phosphoserine.

This is an uncharacterized protein from Schizosaccharomyces pombe (strain 972 / ATCC 24843) (Fission yeast).